The sequence spans 494 residues: Glutamyl-tRNA(Gln) amidotransferase subunit A (494 aa).

Catalysis depends on charge relay system residues Lys-78 and Ser-158. Residue Ser-182 is the Acyl-ester intermediate of the active site.

Belongs to the amidase family. GatA subfamily. Heterotrimer of A, B and C subunits.

It carries out the reaction L-glutamyl-tRNA(Gln) + L-glutamine + ATP + H2O = L-glutaminyl-tRNA(Gln) + L-glutamate + ADP + phosphate + H(+). Its function is as follows. Allows the formation of correctly charged Gln-tRNA(Gln) through the transamidation of misacylated Glu-tRNA(Gln) in organisms which lack glutaminyl-tRNA synthetase. The reaction takes place in the presence of glutamine and ATP through an activated gamma-phospho-Glu-tRNA(Gln). This chain is Glutamyl-tRNA(Gln) amidotransferase subunit A, found in Jannaschia sp. (strain CCS1).